Reading from the N-terminus, the 191-residue chain is MKLDVFAGQEKSELSMIEVARAILEERGRDNEMYFSDLVNEIQNYLGKSDAGIRHALPFFYTDLNTDGSFIPLGENKWGLRSWYAIDEIDEEIITLEEDEDGAQKRKKKRVNAFMDGDEDAIDYRDDDPEDEDFTEESAEVEYDEDDPDDEKSEVESYDSELNEIIPEDDFEEVDINEEDEEDEEDEEPVL.

Positions leucine 14–tryptophan 83 constitute an HTH HARE-type domain. Residues aspartate 118–leucine 191 form a disordered region.

It belongs to the RpoE family. In terms of assembly, RNAP is composed of a core of 2 alpha, a beta and a beta' subunits. The core is associated with a delta subunit and one of several sigma factors.

In terms of biological role, participates in both the initiation and recycling phases of transcription. In the presence of the delta subunit, RNAP displays an increased specificity of transcription, a decreased affinity for nucleic acids, and an increased efficiency of RNA synthesis because of enhanced recycling. This chain is Probable DNA-directed RNA polymerase subunit delta, found in Streptococcus pyogenes serotype M18 (strain MGAS8232).